We begin with the raw amino-acid sequence, 393 residues long: Protein TsgA (393 aa).

12 consecutive transmembrane segments (helical) span residues 11–31 (WISF…GMVM), 51–71 (FLNA…EIIP), 78–98 (FGFI…SLAL), 101–121 (AAMF…TFLI), 134–154 (LLFT…VAAF), 162–182 (WYWV…LTFG), 206–226 (IGVL…LGFI), 245–265 (ALVS…SFIL), 273–293 (ILTV…TGTQ), 298–318 (WFIL…ITLG), 332–352 (FILT…GPIV), and 361–381 (LLTA…LGFV).

Belongs to the major facilitator superfamily. TsgA family.

The protein resides in the cell inner membrane. This Salmonella schwarzengrund (strain CVM19633) protein is Protein TsgA.